The primary structure comprises 105 residues: ATPase inhibitor A, mitochondrial (105 aa).

Residues 17–52 (MSSDQLGELGTGAGKGGGGGGSVRAAGGSFGRREAA) are disordered. The segment at 22-51 (LGELGTGAGKGGGGGGSVRAAGGSFGRREA) is N-terminal inhibitory region. Gly residues predominate over residues 25-38 (LGTGAGKGGGGGGS). A coiled-coil region spans residues 58–105 (FRQKEREQLAALKNHHEEEIDHHKKEIERLQREIDRHKGKIRKLKHDD). Residues 73 to 105 (HEEEIDHHKKEIERLQREIDRHKGKIRKLKHDD) form an antiparallel alpha-helical coiled coil region region.

The protein belongs to the ATPase inhibitor family. Homodimer; represents the active form and is present at a pH value below 6.5. Homotetramer; represents the inactive form and is present at a pH value above 7.0.

The protein resides in the mitochondrion. Endogenous F(1)F(o)-ATPase inhibitor limiting ATP depletion when the mitochondrial membrane potential falls below a threshold and the F(1)F(o)-ATP synthase starts hydrolyzing ATP to pump protons out of the mitochondrial matrix. Required to avoid the consumption of cellular ATP when the F(1)F(o)-ATP synthase enzyme acts as an ATP hydrolase. Indirectly acts as a regulator of heme synthesis in erythroid tissues: regulates heme synthesis by modulating the mitochondrial pH and redox potential, allowing fech to efficiently catalyze the incorporation of iron into protoporphyrin IX to produce heme. The chain is ATPase inhibitor A, mitochondrial from Danio rerio (Zebrafish).